Here is a 415-residue protein sequence, read N- to C-terminus: Gamma-glutamyl phosphate reductase (415 aa).

This sequence belongs to the gamma-glutamyl phosphate reductase family.

It is found in the cytoplasm. The enzyme catalyses L-glutamate 5-semialdehyde + phosphate + NADP(+) = L-glutamyl 5-phosphate + NADPH + H(+). It participates in amino-acid biosynthesis; L-proline biosynthesis; L-glutamate 5-semialdehyde from L-glutamate: step 2/2. Its function is as follows. Catalyzes the NADPH-dependent reduction of L-glutamate 5-phosphate into L-glutamate 5-semialdehyde and phosphate. The product spontaneously undergoes cyclization to form 1-pyrroline-5-carboxylate. The protein is Gamma-glutamyl phosphate reductase of Xylella fastidiosa (strain 9a5c).